A 363-amino-acid chain; its full sequence is MGFKCGIVGLPNVGKSTLFNALTKAGIEAANYPFCTIEPNTGVVPMPDPRLDALAEIVKPERILPTTMEFVDIAGLVAGASKGEGLGNKFLANIRETDAIGHVVRCFENDDIVHVAGKIDPLDDIDTINTELALADLDSCERAIQRLQKRAKGGDKEAKFELSVMEKILPVLENAGMIRSVGLDKEELQAIKSYNFLTLKPTMYIANVNEDGFENNPYLDRVREIAAKEGAVVVPVCAAIESEIAELDDEEKVEFLQDLGIEEPGLNRVIRAGYALLNLQTYFTAGVKEVRAWTVSVGATAPKAAAVIHTDFEKGFIRAEVIAYEDFIQFNGENGAKEAGKWRLEGKDYIVQDGDVMHFRFNV.

One can recognise an OBG-type G domain in the interval 3 to 256 (FKCGIVGLPN…LDDEEKVEFL (254 aa)). 12-17 (NVGKST) serves as a coordination point for ATP. 2 residues coordinate Mg(2+): Ser16 and Thr36. The TGS domain maps to 278-361 (NLQTYFTAGV…QDGDVMHFRF (84 aa)).

Mg(2+) serves as cofactor.

In terms of biological role, ATPase that binds to both the 70S ribosome and the 50S ribosomal subunit in a nucleotide-independent manner. Does not hydrolyze GTP. The chain is Ribosome-binding ATPase YchF from Haemophilus influenzae (strain ATCC 51907 / DSM 11121 / KW20 / Rd).